Reading from the N-terminus, the 433-residue chain is Glutamate--tRNA ligase 1 (433 aa).

A 'HIGH' region motif is present at residues 7–17 (PSPTGLIHLGN). A 'KMSKS' region motif is present at residues 230–234 (KMSKR). Lys-233 provides a ligand contact to ATP.

Belongs to the class-I aminoacyl-tRNA synthetase family. Glutamate--tRNA ligase type 1 subfamily. In terms of assembly, monomer.

The protein resides in the cytoplasm. It catalyses the reaction tRNA(Glu) + L-glutamate + ATP = L-glutamyl-tRNA(Glu) + AMP + diphosphate. Functionally, catalyzes the attachment of glutamate to tRNA(Glu) in a two-step reaction: glutamate is first activated by ATP to form Glu-AMP and then transferred to the acceptor end of tRNA(Glu). The sequence is that of Glutamate--tRNA ligase 1 from Neorickettsia sennetsu (strain ATCC VR-367 / Miyayama) (Ehrlichia sennetsu).